Reading from the N-terminus, the 45-residue chain is Unknown protein from spots 23/28/205 of 2D-PAGE of thylakoid (45 aa).

The protein resides in the plastid. Its subcellular location is the chloroplast thylakoid. In Pisum sativum (Garden pea), this protein is Unknown protein from spots 23/28/205 of 2D-PAGE of thylakoid.